A 130-amino-acid polypeptide reads, in one-letter code: Large ribosomal subunit protein bL19 (130 aa).

This sequence belongs to the bacterial ribosomal protein bL19 family.

Its function is as follows. This protein is located at the 30S-50S ribosomal subunit interface and may play a role in the structure and function of the aminoacyl-tRNA binding site. In Parvibaculum lavamentivorans (strain DS-1 / DSM 13023 / NCIMB 13966), this protein is Large ribosomal subunit protein bL19.